We begin with the raw amino-acid sequence, 406 residues long: Mitochondrial ribosome-associated GTPase 2 (406 aa).

Residues phenylalanine 15–tryptophan 406 are localized in the mitochondria. Positions lysine 30 to tryptophan 406 are not localized in the mitochondria. Residues arginine 70–valine 224 form the Obg domain. In terms of domain architecture, OBG-type G spans alanine 225–aspartate 390. GTP-binding positions include glycine 231–serine 238, phenylalanine 256–lysine 260, aspartate 278–glycine 281, asparagine 345–aspartate 348, and serine 371–leucine 373. Mg(2+) contacts are provided by serine 238 and threonine 258.

The protein belongs to the TRAFAC class OBG-HflX-like GTPase superfamily. OBG GTPase family. Associates with the mitochondrial ribosome large subunit; the association occurs in a GTP-dependent manner. Requires Mg(2+) as cofactor.

The protein localises to the mitochondrion. The protein resides in the mitochondrion inner membrane. Functionally, plays a role in the regulation of the mitochondrial ribosome assembly and of translational activity. Displays GTPase activity. Involved in the ribosome maturation process. The polypeptide is Mitochondrial ribosome-associated GTPase 2 (MTG2) (Pongo abelii (Sumatran orangutan)).